A 263-amino-acid chain; its full sequence is Protein IQ-DOMAIN 9 (263 aa).

A disordered region spans residues 16–41; sequence SKQGTEKKKTSAVKPKKGSKKKGTSL. The short motif at 21–28 is the Nuclear localization signal 1 element; it reads EKKKTSAV. Residues 25-38 are compositionally biased toward basic residues; it reads TSAVKPKKGSKKKG. One can recognise an IQ domain in the interval 46–75; that stretch reads EDWAATRIQTAFKAYKARKSLRRLKGIARA. Positions 59 to 78 are calmodulin-binding; sequence AYKARKSLRRLKGIARAKLS. The Nuclear localization signal 2 signature appears at 107–114; that stretch reads ARRVCMVT. The disordered stretch occupies residues 216-263; that stretch reads TPKKPKSSKTDSNSPAKRTVSLSSVPAKTPFPGARNTVKPRRLSFPGA. Polar residues predominate over residues 226–241; sequence DSNSPAKRTVSLSSVP.

Belongs to the IQD family. In terms of assembly, binds to multiple calmodulin (CaM) in the presence of Ca(2+) and CaM-like proteins.

Its subcellular location is the nucleus. It is found in the nuclear body. In terms of biological role, may be involved in cooperative interactions with calmodulins or calmodulin-like proteins. Recruits calmodulin proteins to microtubules, thus being a potential scaffold in cellular signaling and trafficking. May associate with nucleic acids and regulate gene expression at the transcriptional or post-transcriptional level. The protein is Protein IQ-DOMAIN 9 of Arabidopsis thaliana (Mouse-ear cress).